The sequence spans 500 residues: Cytochrome P450 monooxygenase astJ (500 aa).

Cysteine 440 provides a ligand contact to heme.

It belongs to the cytochrome P450 family. Heme is required as a cofactor.

The protein operates within secondary metabolite biosynthesis; terpenoid biosynthesis. Functionally, cytochrome P450 monooxygenase; part of the gene cluster that mediates the biosynthesis of astellolides, drimane-type sesquiterpene esters that show antimicrobial, anti-inflammatory, and anti-tumor activities. The first step in astellolide biosynthesis is performed by the sesquiterpene cyclase astC that catalyzes the formation of drimanyl pyrophosphate from farnesyl pyrophosphate. Drimanyl pyrophosphate is then dephosphorylated by the sesquiterpene phosphatase astI to produce drimanyl monophosphate which is further dephosphorylated to drim-8-ene-11-ol by atsK. Drim-8-ene-11-ol is converted to confertifolin, probably by the cytochrome P450 monooxygenase astD and/or the dehydrogenase astE. The cytochrome P450 monooxygenases astB, astF and astJ then hydroxylate confertifolin at C6, C14, or C15 to form trihydroxy confertifolin. The nonribosomal peptide synthetase astA catalyzes ester bond formation between trihydroxy contifolin and benzoic acid (BA) or 4-hydroxy benzoic acid (4HBA), leading to the formation of dideacetyl astellolides A and B, respectively. Finally, the O-acetyltransferase astG converts dideacetyl astellolides A and B into deacetyl astellolides A and B. This chain is Cytochrome P450 monooxygenase astJ, found in Aspergillus oryzae (strain ATCC 42149 / RIB 40) (Yellow koji mold).